The primary structure comprises 202 residues: Imidazoleglycerol-phosphate dehydratase (202 aa).

This sequence belongs to the imidazoleglycerol-phosphate dehydratase family.

The protein localises to the cytoplasm. The catalysed reaction is D-erythro-1-(imidazol-4-yl)glycerol 3-phosphate = 3-(imidazol-4-yl)-2-oxopropyl phosphate + H2O. Its pathway is amino-acid biosynthesis; L-histidine biosynthesis; L-histidine from 5-phospho-alpha-D-ribose 1-diphosphate: step 6/9. The protein is Imidazoleglycerol-phosphate dehydratase of Synechococcus sp. (strain WH7803).